A 736-amino-acid polypeptide reads, in one-letter code: Sulfate transporter (736 aa).

Residues 1–28 (MSSESKEPHVLSPKDSFEGNDRYSPPSR) form a disordered region. A phosphoserine mark is found at Ser12 and Ser16. 2 consecutive transmembrane segments (helical) span residues 114 to 134 (VMSGLIVGILLVPQSIAYSLL) and 139 to 159 (PIYGLYTSFFASLIYFLLGTS). Asn201 and Asn207 each carry an N-linked (GlcNAc...) asparagine glycan. The next 6 membrane-spanning stretches (helical) occupy residues 229–249 (FLAGIYQVAMGFFQVGFVSVY), 257–277 (GFVTGASFTILTSQAKYLLGL), 380–400 (LIPSVAVDAIAISIIGFAITV), 422–442 (AIGFCNIIPSFFHCFTTSAAL), 457–477 (LSGVMTALVLLLVLLVIAPLF), and 526–546 (LISTELGLLIGVCFSMFCVIL). The region spanning 570 to 721 (AYKNLQARPG…YSVYEAMAFA (152 aa)) is the STAS domain.

Belongs to the SLC26A/SulP transporter (TC 2.A.53) family. N-glycosylated.

It localises to the cell membrane. Its subcellular location is the apical cell membrane. It catalyses the reaction oxalate(in) + sulfate(out) = oxalate(out) + sulfate(in). It carries out the reaction sulfate(out) + 2 chloride(in) = sulfate(in) + 2 chloride(out). The catalysed reaction is oxalate(out) + 2 chloride(in) = oxalate(in) + 2 chloride(out). The enzyme catalyses bromide(in) + chloride(out) = bromide(out) + chloride(in). It catalyses the reaction nitrate(in) + chloride(out) = nitrate(out) + chloride(in). It carries out the reaction iodide(in) + chloride(out) = iodide(out) + chloride(in). In terms of biological role, sulfate transporter which mediates sulfate uptake into chondrocytes in order to maintain adequate sulfation of proteoglycans which is needed for cartilage development. Mediates electroneutral anion exchange of sulfate ions for oxalate ions, sulfate and oxalate ions for chloride and/or hydroxyl ions and chloride ions for bromide, iodide and nitrate ions. The coupling of sulfate transport to both hydroxyl and chloride ions likely serves to ensure transport at both acidic pH when most sulfate uptake is mediated by sulfate-hydroxide exchange and alkaline pH when most sulfate uptake is mediated by sulfate-chloride exchange. Essential for chondrocyte proliferation, differentiation and cell size expansion. This is Sulfate transporter (SLC26A2) from Equus caballus (Horse).